The chain runs to 307 residues: Elongation factor Ts (307 aa).

The involved in Mg(2+) ion dislocation from EF-Tu stretch occupies residues 80–83 (TDFV).

The protein belongs to the EF-Ts family.

The protein localises to the cytoplasm. Its function is as follows. Associates with the EF-Tu.GDP complex and induces the exchange of GDP to GTP. It remains bound to the aminoacyl-tRNA.EF-Tu.GTP complex up to the GTP hydrolysis stage on the ribosome. This is Elongation factor Ts (tsf) from Zymomonas mobilis subsp. mobilis (strain ATCC 31821 / ZM4 / CP4).